A 225-amino-acid chain; its full sequence is Pyridoxine/pyridoxamine 5'-phosphate oxidase (225 aa).

Substrate contacts are provided by residues 21–24 (RKSY) and K79. Residues 74–79 (RVVLIK), 89–90 (YT), R95, and K96 contribute to the FMN site. The substrate site is built by Y136, R140, and S144. FMN contacts are provided by residues 153–154 (QS) and W197. 203-205 (RLH) contributes to the substrate binding site. Position 207 (R207) interacts with FMN.

It belongs to the pyridoxamine 5'-phosphate oxidase family. As to quaternary structure, homodimer. FMN serves as cofactor.

It catalyses the reaction pyridoxamine 5'-phosphate + O2 + H2O = pyridoxal 5'-phosphate + H2O2 + NH4(+). It carries out the reaction pyridoxine 5'-phosphate + O2 = pyridoxal 5'-phosphate + H2O2. It functions in the pathway cofactor metabolism; pyridoxal 5'-phosphate salvage; pyridoxal 5'-phosphate from pyridoxamine 5'-phosphate: step 1/1. The protein operates within cofactor metabolism; pyridoxal 5'-phosphate salvage; pyridoxal 5'-phosphate from pyridoxine 5'-phosphate: step 1/1. Its function is as follows. Catalyzes the oxidation of either pyridoxine 5'-phosphate (PNP) or pyridoxamine 5'-phosphate (PMP) into pyridoxal 5'-phosphate (PLP). This chain is Pyridoxine/pyridoxamine 5'-phosphate oxidase, found in Paracidovorax citrulli (strain AAC00-1) (Acidovorax citrulli).